A 362-amino-acid polypeptide reads, in one-letter code: Cobalt-precorrin-5B C(1)-methyltransferase (362 aa).

The protein belongs to the CbiD family.

The enzyme catalyses Co-precorrin-5B + S-adenosyl-L-methionine = Co-precorrin-6A + S-adenosyl-L-homocysteine. Its pathway is cofactor biosynthesis; adenosylcobalamin biosynthesis; cob(II)yrinate a,c-diamide from sirohydrochlorin (anaerobic route): step 6/10. Catalyzes the methylation of C-1 in cobalt-precorrin-5B to form cobalt-precorrin-6A. The chain is Cobalt-precorrin-5B C(1)-methyltransferase from Geobacter sulfurreducens (strain ATCC 51573 / DSM 12127 / PCA).